The primary structure comprises 371 residues: Dihydroorotate dehydrogenase (quinone) (371 aa).

FMN contacts are provided by residues 79-83 (AGFDK) and threonine 103. Residue lysine 83 coordinates substrate. 128-132 (NRMGF) contacts substrate. Positions 156 and 189 each coordinate FMN. Asparagine 189 is a binding site for substrate. The Nucleophile role is filled by serine 192. Substrate is bound at residue asparagine 194. FMN-binding residues include lysine 225 and threonine 253. 254-255 (NT) serves as a coordination point for substrate. Residues glycine 279, glycine 308, and 329 to 330 (YT) each bind FMN.

The protein belongs to the dihydroorotate dehydrogenase family. Type 2 subfamily. Monomer. FMN serves as cofactor.

The protein localises to the cell membrane. The enzyme catalyses (S)-dihydroorotate + a quinone = orotate + a quinol. It participates in pyrimidine metabolism; UMP biosynthesis via de novo pathway; orotate from (S)-dihydroorotate (quinone route): step 1/1. Catalyzes the conversion of dihydroorotate to orotate with quinone as electron acceptor. The sequence is that of Dihydroorotate dehydrogenase (quinone) from Corynebacterium glutamicum (strain R).